We begin with the raw amino-acid sequence, 476 residues long: Glycogen synthase (476 aa).

Lysine 15 serves as a coordination point for ADP-alpha-D-glucose.

The protein belongs to the glycosyltransferase 1 family. Bacterial/plant glycogen synthase subfamily.

The enzyme catalyses [(1-&gt;4)-alpha-D-glucosyl](n) + ADP-alpha-D-glucose = [(1-&gt;4)-alpha-D-glucosyl](n+1) + ADP + H(+). It participates in glycan biosynthesis; glycogen biosynthesis. In terms of biological role, synthesizes alpha-1,4-glucan chains using ADP-glucose. This is Glycogen synthase from Chlamydia pneumoniae (Chlamydophila pneumoniae).